A 342-amino-acid polypeptide reads, in one-letter code: N-alpha-acetyl-L-2,4-diaminobutyric acid deacetylase (342 aa).

The tract at residues Thr103–Pro124 is disordered.

The protein belongs to the DoeB deacetylase family. It depends on Zn(2+) as a cofactor.

The protein localises to the cytoplasm. It catalyses the reaction (2S)-2-acetamido-4-aminobutanoate + H2O = L-2,4-diaminobutanoate + acetate. Involved in the degradation of ectoine, which allows H.elongata to utilize ectoine as both a carbon and a nitrogen source for growth. Catalyzes the deacetylation of N-alpha-acetyl-L-2,4-diaminobutyrate (N-alpha-Ac-DABA) to yield L-2,4-diaminobutyrate (DABA). This chain is N-alpha-acetyl-L-2,4-diaminobutyric acid deacetylase, found in Halomonas elongata (strain ATCC 33173 / DSM 2581 / NBRC 15536 / NCIMB 2198 / 1H9).